The primary structure comprises 249 residues: Large ribosomal subunit protein uL10m (249 aa).

Residues 1–31 constitute a mitochondrion transit peptide; that stretch reads MLQLRFMPGWVPRNGFFGLKETIGTVHKRFY. The tract at residues 226 to 249 is disordered; sequence SHNDNQKPKEDVESTTDAESKGSK.

This sequence belongs to the universal ribosomal protein uL10 family. In terms of assembly, component of the mitochondrial large ribosomal subunit (mt-LSU). Mature yeast 74S mitochondrial ribosomes consist of a small (37S) and a large (54S) subunit. The 37S small subunit contains a 15S ribosomal RNA (15S mt-rRNA) and 34 different proteins. The 54S large subunit contains a 21S rRNA (21S mt-rRNA) and 46 different proteins.

It is found in the mitochondrion. Component of the mitochondrial ribosome (mitoribosome), a dedicated translation machinery responsible for the synthesis of mitochondrial genome-encoded proteins, including at least some of the essential transmembrane subunits of the mitochondrial respiratory chain. The mitoribosomes are attached to the mitochondrial inner membrane and translation products are cotranslationally integrated into the membrane. The protein is Large ribosomal subunit protein uL10m (MRPL11) of Saccharomyces cerevisiae (strain ATCC 204508 / S288c) (Baker's yeast).